We begin with the raw amino-acid sequence, 1436 residues long: Inositol hexakisphosphate and diphosphoinositol-pentakisphosphate kinase 1 (1436 aa).

64-65 (KK) contributes to the substrate binding site. Residues Arg-145, Lys-198, His-205, Arg-224, 248-251 (EEFM), and 257-259 (DVK) contribute to the ATP site. Residue 224–225 (RK) coordinates substrate. Substrate-binding residues include Lys-259 and Arg-273. ATP-binding positions include Ser-275, Asp-320, and 332 to 334 (DVN). 337–340 (SFVK) serves as a coordination point for substrate. Positions 382-453 (PTTSGTMMEL…VLDITRLLLA (72 aa)) are polyphosphoinositide-binding domain. The tract at residues 915–998 (GSAPAGCGFR…TSSSRPGGYR (84 aa)) is disordered. Phosphoserine occurs at positions 939, 982, 1032, 1068, 1140, and 1147. Disordered stretches follow at residues 1131-1191 (NHQA…GFSD) and 1389-1436 (SELS…EAIS). Residues 1163 to 1181 (SSGPSSTVSSAGPSSPTTV) are compositionally biased toward low complexity. The span at 1405-1436 (LSEETELQAQEVSEEIDQESEVVDELPPEAIS) shows a compositional bias: acidic residues.

The protein belongs to the histidine acid phosphatase family. VIP1 subfamily.

Its subcellular location is the cytoplasm. The protein localises to the cytosol. It is found in the cell membrane. The catalysed reaction is 1D-myo-inositol hexakisphosphate + ATP = 1-diphospho-1D-myo-inositol 2,3,4,5,6-pentakisphosphate + ADP. It catalyses the reaction 5-diphospho-1D-myo-inositol 1,2,3,4,6-pentakisphosphate + ATP + H(+) = 1,5-bis(diphospho)-1D-myo-inositol 2,3,4,6-tetrakisphosphate + ADP. Its function is as follows. Bifunctional inositol kinase that acts in concert with the IP6K kinases IP6K1, IP6K2 and IP6K3 to synthesize the diphosphate group-containing inositol pyrophosphates diphosphoinositol pentakisphosphate, PP-InsP5, and bis-diphosphoinositol tetrakisphosphate, (PP)2-InsP4. PP-InsP5 and (PP)2-InsP4, also respectively called InsP7 and InsP8, regulate a variety of cellular processes, including apoptosis, vesicle trafficking, cytoskeletal dynamics, exocytosis, insulin signaling and neutrophil activation. Phosphorylates inositol hexakisphosphate (InsP6) at position 1 to produce PP-InsP5 which is in turn phosphorylated by IP6Ks to produce (PP)2-InsP4. Alternatively, phosphorylates PP-InsP5 at position 1, produced by IP6Ks from InsP6, to produce (PP)2-InsP4. Activated when cells are exposed to hyperosmotic stress. The sequence is that of Inositol hexakisphosphate and diphosphoinositol-pentakisphosphate kinase 1 from Mus musculus (Mouse).